The sequence spans 304 residues: MATH domain and coiled-coil domain-containing protein At2g42470 (304 aa).

The MATH domain occupies Q6–V123. Positions F219–R292 form a coiled coil.

In Arabidopsis thaliana (Mouse-ear cress), this protein is MATH domain and coiled-coil domain-containing protein At2g42470.